The sequence spans 1578 residues: FERM and PDZ domain-containing protein 1 (1578 aa).

The 79-residue stretch at 57-135 (TVKIDKDTLL…SLSITVVRCT (79 aa)) folds into the PDZ domain. An FERM domain is found at 181 to 496 (NVLKLYLENG…GYYRLLVDPV (316 aa)). Disordered regions lie at residues 555–616 (KEEQ…EEDD), 720–743 (SDSS…QGWT), and 759–831 (PLAF…VKKY). Over residues 720–729 (SDSSESTASR) the composition is skewed to polar residues. A compositionally biased stretch (low complexity) spans 730 to 742 (QGGAPPAWGQQGW). Residues 793 to 811 (AEPSATSLQNKASTSSPEN) are compositionally biased toward polar residues. Basic residues predominate over residues 822 to 831 (PSRRGGVKKY). Positions 924 to 931 (EPETMETK) are important for interaction with GPSM2. Disordered regions lie at residues 950–1030 (PNNK…LASN), 1070–1194 (KYTE…QGCQ), and 1347–1374 (PQPE…SAGS). Positions 968–986 (TPHCSNPGSSGPDTAQARP) are enriched in polar residues. Residues 1100–1117 (TKEEPQGQLSLERDREVT) show a composition bias toward basic and acidic residues. Positions 1139 to 1150 (DVSNNVSQTLDI) are enriched in polar residues.

Interacts with GPSM1. Interacts with GPSM2 (via TPR repeat region).

It localises to the cytoplasm. The protein resides in the cytosol. It is found in the cell membrane. Stabilizes membrane-bound GPSM1, and thereby promotes its interaction with GNAI1. This chain is FERM and PDZ domain-containing protein 1 (FRMPD1), found in Homo sapiens (Human).